The chain runs to 206 residues: MADLSPVIQPHREGGSRYGYTMFPGLESEAELSLSLASTKTRSYGSTGSVAAPLAERYIEHCLSPSDTLQGIALKYGVTMEQIKRANKLFSTDCIFLRKSLNIPVISKKGSLFNGLGSLDSPENETQDTCSSPTEEPALAESHTVSIDSSAKTNQPIVRSDEELSAKDFLQRLDLQIKRSTQAAQRLKEEDDLRHDGSYATCSYQH.

In terms of domain architecture, LysM spans 59–103 (IEHCLSPSDTLQGIALKYGVTMEQIKRANKLFSTDCIFLRKSLNI). The segment at 184–206 (AQRLKEEDDLRHDGSYATCSYQH) is disordered. Residues 186–197 (RLKEEDDLRHDG) show a composition bias toward basic and acidic residues.

The protein is LysM and putative peptidoglycan-binding domain-containing protein 2 (lysmd2) of Xenopus laevis (African clawed frog).